The chain runs to 696 residues: UvrABC system protein B (696 aa).

Residues 46-433 form the Helicase ATP-binding domain; it reads EGVEDGLSFQ…SGQTAEQVVR (388 aa). An ATP-binding site is contributed by 59 to 66; sequence GVTGSGKT. Positions 112-135 match the Beta-hairpin motif; the sequence is YYDYYQPEAYVPQRDLFIEKDSSI. The region spanning 450–616 is the Helicase C-terminal domain; that stretch reads QVDDVLSEIT…GVVKRIKDII (167 aa). The region spanning 647-682 is the UVR domain; it reads AKEIKRLEKQMADYAKNLEFEKAAQTRDQLALLRER.

Belongs to the UvrB family. As to quaternary structure, forms a heterotetramer with UvrA during the search for lesions. Interacts with UvrC in an incision complex.

It localises to the cytoplasm. The UvrABC repair system catalyzes the recognition and processing of DNA lesions. A damage recognition complex composed of 2 UvrA and 2 UvrB subunits scans DNA for abnormalities. Upon binding of the UvrA(2)B(2) complex to a putative damaged site, the DNA wraps around one UvrB monomer. DNA wrap is dependent on ATP binding by UvrB and probably causes local melting of the DNA helix, facilitating insertion of UvrB beta-hairpin between the DNA strands. Then UvrB probes one DNA strand for the presence of a lesion. If a lesion is found the UvrA subunits dissociate and the UvrB-DNA preincision complex is formed. This complex is subsequently bound by UvrC and the second UvrB is released. If no lesion is found, the DNA wraps around the other UvrB subunit that will check the other stand for damage. This is UvrABC system protein B from Burkholderia mallei (strain ATCC 23344).